Consider the following 143-residue polypeptide: MAKKIVGFIKLQVPAGKANPSPPIGPALGQRGLNIMEFCKAFNAQTQGVEPGLPLPVVITAFADKSFTFIIKTPPATTLIKKAIKLEKGSSNALSTKVGKITRAQLEEIAKTKLKDMNAANVDAAVRTLAGSARSMGVTVEGL.

Belongs to the universal ribosomal protein uL11 family. Part of the ribosomal stalk of the 50S ribosomal subunit. Interacts with L10 and the large rRNA to form the base of the stalk. L10 forms an elongated spine to which L12 dimers bind in a sequential fashion forming a multimeric L10(L12)X complex. In terms of processing, one or more lysine residues are methylated.

Functionally, forms part of the ribosomal stalk which helps the ribosome interact with GTP-bound translation factors. This chain is Large ribosomal subunit protein uL11, found in Paracidovorax citrulli (strain AAC00-1) (Acidovorax citrulli).